The following is a 508-amino-acid chain: Putative POTE ankyrin domain family member M (508 aa).

ANK repeat units follow at residues 172–201 (QKRTALHLASANGNSEVVKLLLDRRCQLNI), 205–234 (KKRTALTKAVQCQEDECALMLLEHGTDPNI), 238–267 (YGNTALHYAIYNEDKLMAKALLLYGADIES), 271–300 (HGLTPLLLGVHEQKQQVVKFLIKKKANLNA), and 304–333 (YGRTVLILAVCCGSASIVSLLLEQNIDVSS). Residues 369 to 487 (SSENSNPEQD…KQLSEEQNTG (119 aa)) form a disordered region. Composition is skewed to basic and acidic residues over residues 377-392 (QDLKLTSEEESQRLKG) and 406-421 (EINKGGDRKVEEEMKK). Residues 476-487 (TQKQLSEEQNTG) show a composition bias toward polar residues.

It belongs to the POTE family.

The chain is Putative POTE ankyrin domain family member M (POTEM) from Homo sapiens (Human).